The sequence spans 150 residues: uncharacterized protein (150 aa).

The region spanning 5–66 is the HTH asnC-type domain; that stretch reads LDRTDKMLLE…KPNYKKLNLG (62 aa). A DNA-binding region (H-T-H motif) is located at residues 24–43; sequence IAALSKKLGIPRTTVHYRIK.

This is an uncharacterized protein from Pyrococcus furiosus (strain ATCC 43587 / DSM 3638 / JCM 8422 / Vc1).